The chain runs to 43 residues: uncharacterized protein (43 aa).

Over residues 1–37 (MIIKNNNNNNNNNNNNNNNNNNNNNNNNNNNNNNNNN) the composition is skewed to low complexity. Residues 1–43 (MIIKNNNNNNNNNNNNNNNNNNNNNNNNNNNNNNNNNIEIIIK) are disordered.

This is an uncharacterized protein from Dictyostelium discoideum (Social amoeba).